The sequence spans 82 residues: MVFLLCFFLVADVSYGINGDCELPKVVGPCRARFPRYYYNSSSKRCEKFIYGGCRGNANNFHTLEECEKVCGVRSRDSPKEN.

The N-terminal stretch at 1–16 (MVFLLCFFLVADVSYG) is a signal peptide. The region spanning 21-71 (CELPKVVGPCRARFPRYYYNSSSKRCEKFIYGGCRGNANNFHTLEECEKVC) is the BPTI/Kunitz inhibitor domain. 3 disulfide bridges follow: cysteine 21/cysteine 71, cysteine 30/cysteine 54, and cysteine 46/cysteine 67. Positions 76 to 82 (RDSPKEN) are excised as a propeptide.

Belongs to the venom Kunitz-type family. Sea anemone type 2 potassium channel toxin subfamily.

It is found in the secreted. It localises to the nematocyst. Functionally, dual-function toxin that inhibits both the serine protease trypsin (Kd=30 nM) and voltage-gated potassium channels Kv1.2/KCNA2 (IC(50)=2800 nM). The polypeptide is U-actitoxin-Avd3h (Anemonia viridis (Snakelocks anemone)).